A 957-amino-acid polypeptide reads, in one-letter code: MDNQRKKRNSILKVRQETNLMDVLEDTTVATSSGATNRRVSFHQLKQVKNYDRAGGQIIDATPIKEKAYDTMSSDGNSTSHTTRLDMDITGLNSTPVTPKTQTPFNGSMDMSVENYDETARLFDITRDKTICVYEKTVETTTTKVVERVVRVPEGSSGANNDTLALFNMTDRAEVDMSVDGGSEGALKVDDTISVFNQTNVEPVDMDITVQKPLDDTMGVFRSPAIPTSSRIQKTSASTMDSQNMSMSMDMDITSNEMMAAFKSPKIMSSVLVAAVKDSDDMDLTGLVNTAAEDVADDTMAVFRTPTRAQTTIQKTSGEIPESVDMEMTGIGNSDAPDDTMAVFRTPTRAQQTVQKTSGEIPESVDMEMTLLALLQPVSDVKDNFDDVAMDITQQTLVGVSDDTMAVFKNPAAEKKTPGKPLFDESMEIESTIVCPDNVTFSETAQPENPAYHSSMLMSMASEVSEDVVVQKTSESLQQSSMRMSTTITEDVTASKNPESSTISEVQKIPEVVQKTSNGVEDIQNASETPEDVSMEITSEVVEGERGTMYQMSTMDVDSLQKTSLASPKIQMTSFTDTSEKMGGVSETSLIQTMMIEASESMECSEAPEDVTASPEGLTMAPEDVTVASNVSGIVSVSSISRRRRSQLQESLHRESPRRMALEKNLSMMSQMGGASEALAEFRQNKLKNQTTLLNDSVNTTIGANTSESIGRDIFKMNTSIRSPAHRSSTAPSPMVSKTLPESPKFHVTPFDAAIVNVIYLTPEDAETQEPIPEAFEFEKVLSAEESNVHKEIDTANWSISGAIKSNLDAEVMNIARGQAEMKFLELRGKFAKESNVEIAQKIQELESQNLELAGKIRDSQNLRVLQKQIEELQKPQFSLEEAERIENEYHETKVELLRAQAASIRRQHELLMTIREERRRLIHEIEEKDELLARLEEEDRKKKEEMVERVRGVMRA.

The stretch at 87 to 90 (MDIT) is repeat 1. An 8 X 4 AA repeats of M-[D/E]-[I/L/M]-[S/T] region spans residues 87–393 (MDITGLNSTP…NFDDVAMDIT (307 aa)). The tract at residues 89–111 (ITGLNSTPVTPKTQTPFNGSMDM) is disordered. The span at 91 to 106 (GLNSTPVTPKTQTPFN) shows a compositional bias: polar residues. 7 tandem repeats follow at residues 109 to 112 (MDMS), 206 to 209 (MDIT), 251 to 254 (MDIT), 282 to 285 (MDLT), 326 to 329 (MEMT), 367 to 370 (MEMT), and 390 to 393 (MDIT). Positions 476–504 (SLQQSSMRMSTTITEDVTASKNPESSTIS) are disordered. A coiled-coil region spans residues 830-950 (KFAKESNVEI…RKKKEEMVER (121 aa)).

As to quaternary structure, component of the KNL1 complex composed of knl-1 and kbp-5. Part of the ten-subunit outer kinetochore KMN network that includes the KNL1, MIS12 and NDC80 complexes. Interacts with the protein phosphatase 1 (PP1) catalytic subunit gsp-1; the interaction is direct. Interacts with the protein phosphatase 1 (PP1) catalytic subunit gsp-2; the interaction is direct. Interacts with the MIS12 complex subunits kbp-1, kbp-2 and mis-12. Interacts with the NDC80 complex components ndc-80 and him-10. Interacts with knl-3. Interacts with kbp-3. Interacts with kbp-4. Interacts with kbp-5.

The protein resides in the cytoplasm. The protein localises to the cell cortex. Its subcellular location is the chromosome. It localises to the centromere. It is found in the kinetochore. Functionally, acts as a component of the outer kinetochore KNL1 complex that serves as a docking point for spindle assembly checkpoint components and mediates microtubule-kinetochore interactions. Kinetochores, consisting of a centromere-associated inner segment and a microtubule-contacting outer segment, play a crucial role in chromosome segregation by mediating the physical connection between centromeric DNA and spindle microtubules. The outer kinetochore is made up of the ten-subunit KMN network, comprising the MIS12, NDC80 and KNL1 complexes, and auxiliary microtubule-associated components; together they connect the outer kinetochore with the inner kinetochore, bind microtubules, and mediate interactions with mitotic checkpoint proteins that delay anaphase until chromosomes are bioriented on the spindle. Binds the protein phosphatase 1 catalytic subunits gsp-1 and gsp-2, which has a role in delaying formation of load-bearing kinetochore-microtubule attachments. Required for the recruitment of spindle-assembly checkpoint components bub-1 and mdf-1/2 to unattached kinetochores. Binds microtubules which plays a role in silencing of the spindle assembly checkpoint, but not the formation of load-bearing microtubule-kinetochore attachments. Has a role in the correct localization of the spindly-like protein spdl-1 and the RZZ complex that is composed of rod-1, czw-1 and zwl-1 to kinetochores. The polypeptide is Outer kinetochore KNL1 complex subunit knl-1 (Caenorhabditis briggsae).